A 120-amino-acid polypeptide reads, in one-letter code: Secreted RxLR effector protein 29 (120 aa).

The first 21 residues, Met-1–Ser-21, serve as a signal peptide directing secretion. Residues Arg-47–Lys-64 carry the RxLR-dEER motif.

The protein belongs to the RxLR effector family.

Its subcellular location is the secreted. The protein localises to the host cytoplasm. It is found in the host nucleus. Its function is as follows. Effector that acts as a broad suppressor of cell death to interrupt plant immunity. Inhibits cell death induced by cell death-inducing proteins, including the PAMP elicitor INF1 from P.infestans. In Plasmopara viticola (Downy mildew of grapevine), this protein is Secreted RxLR effector protein 29.